Reading from the N-terminus, the 200-residue chain is Proteasome subunit beta 2 (200 aa).

Residues 1-7 (MEEKKTG) constitute a propeptide, removed in mature form; by autocatalysis. Catalysis depends on Thr-8, which acts as the Nucleophile.

This sequence belongs to the peptidase T1B family. The 20S proteasome core is composed of 14 alpha and 14 beta subunits that assemble into four stacked heptameric rings, resulting in a barrel-shaped structure. The two inner rings, each composed of seven catalytic beta subunits, are sandwiched by two outer rings, each composed of seven alpha subunits. The catalytic chamber with the active sites is on the inside of the barrel. Has a gated structure, the ends of the cylinder being occluded by the N-termini of the alpha-subunits. Is capped at one or both ends by the proteasome regulatory ATPase, PAN.

It is found in the cytoplasm. It catalyses the reaction Cleavage of peptide bonds with very broad specificity.. The formation of the proteasomal ATPase PAN-20S proteasome complex, via the docking of the C-termini of PAN into the intersubunit pockets in the alpha-rings, triggers opening of the gate for substrate entry. Interconversion between the open-gate and close-gate conformations leads to a dynamic regulation of the 20S proteasome proteolysis activity. Functionally, component of the proteasome core, a large protease complex with broad specificity involved in protein degradation. In Thermococcus gammatolerans (strain DSM 15229 / JCM 11827 / EJ3), this protein is Proteasome subunit beta 2.